An 857-amino-acid polypeptide reads, in one-letter code: DNA mismatch repair protein MutS (857 aa).

613–620 (GPNMGGKS) is an ATP binding site. The disordered stretch occupies residues 797–820 (TSLPHEQPAAHKAKDAPQVPHQSD).

It belongs to the DNA mismatch repair MutS family.

This protein is involved in the repair of mismatches in DNA. It is possible that it carries out the mismatch recognition step. This protein has a weak ATPase activity. The protein is DNA mismatch repair protein MutS of Pseudomonas putida (strain ATCC 700007 / DSM 6899 / JCM 31910 / BCRC 17059 / LMG 24140 / F1).